The primary structure comprises 472 residues: Keratin, type I cytoskeletal 14 (472 aa).

Positions 1–114 (MTTCSRQFTS…AGGDGLLVGS (114 aa)) are head. Residues 115–150 (EKVTMQNLNDRLASYLDKVRALEEANADLEVKIRDW) are coil 1A. The 312-residue stretch at 115 to 426 (EKVTMQNLND…RLLEGEDAHL (312 aa)) folds into the IF rod domain. The tract at residues 151–168 (YQRQRPAEIKDYSPYFKT) is linker 1. Residues 169-260 (IEDLRNKILT…KNHEEEMNAL (92 aa)) form a coil 1B region. The tract at residues 261–283 (RGQVGGDVNVEMDAAPGVDLSRI) is linker 12. A coil 2 region spans residues 284 to 422 (LNEMRDQYEK…ATYRRLLEGE (139 aa)). The tail stretch occupies residues 423–472 (DAHLSSSQFSSGSQSSRDVTSSSRQIRTKVMDVHDGKVVSTHEQVLRTKN). The tract at residues 425 to 472 (HLSSSQFSSGSQSSRDVTSSSRQIRTKVMDVHDGKVVSTHEQVLRTKN) is interaction with Type I keratins and keratin filaments. The segment at 426 to 472 (LSSSQFSSGSQSSRDVTSSSRQIRTKVMDVHDGKVVSTHEQVLRTKN) is disordered. Positions 427–445 (SSSQFSSGSQSSRDVTSSS) are enriched in low complexity. Ser435 is subject to Phosphoserine.

The protein belongs to the intermediate filament family. In terms of assembly, heterotetramer of two type I and two type II keratins. Forms a disulfide-linked heterodimer (via 2B domains) with KRT5 (via 2B domains). Forms a heterodimer with KRT1; the interaction is more abundant in the absence of KRT5. Interacts with PLEC isoform 1C, when in a heterodimer with KRT5. Interacts with TRADD and with keratin filaments. Associates with other type I keratins. Interacts with EPPK1. Interacts with KLHL24. Interacts with PKP1 (via N-terminus) and PKP2. A disulfide bond is formed between rather than within filaments and promotes the formation of a keratin filament cage around the nucleus. In terms of processing, ubiquitinated by the BCR(KLHL24) E3 ubiquitin ligase complex. In terms of tissue distribution, expressed in the corneal epithelium (at protein level). Detected in the basal layer, lowered within the more apically located layers specifically in the stratum spinosum, stratum granulosum but is not detected in stratum corneum. Strongly expressed in the outer root sheath of anagen follicles but not in the germinative matrix, inner root sheath or hair. Found in keratinocytes surrounding the club hair during telogen.

Its subcellular location is the cytoplasm. The protein resides in the nucleus. In terms of biological role, the nonhelical tail domain is involved in promoting KRT5-KRT14 filaments to self-organize into large bundles and enhances the mechanical properties involved in resilience of keratin intermediate filaments in vitro. The polypeptide is Keratin, type I cytoskeletal 14 (KRT14) (Homo sapiens (Human)).